The sequence spans 357 residues: tRNA-specific 2-thiouridylase MnmA (357 aa).

Residues 6-13 (AMSGGVDS) and leucine 32 each bind ATP. Cysteine 101 acts as the Nucleophile in catalysis. A disulfide bond links cysteine 101 and cysteine 193. Residue glycine 125 participates in ATP binding. Positions 143-145 (KDQ) are interaction with tRNA. Cysteine 193 serves as the catalytic Cysteine persulfide intermediate.

The protein belongs to the MnmA/TRMU family.

Its subcellular location is the cytoplasm. It carries out the reaction S-sulfanyl-L-cysteinyl-[protein] + uridine(34) in tRNA + AH2 + ATP = 2-thiouridine(34) in tRNA + L-cysteinyl-[protein] + A + AMP + diphosphate + H(+). Functionally, catalyzes the 2-thiolation of uridine at the wobble position (U34) of tRNA, leading to the formation of s(2)U34. In Mycolicibacterium gilvum (strain PYR-GCK) (Mycobacterium gilvum (strain PYR-GCK)), this protein is tRNA-specific 2-thiouridylase MnmA.